The primary structure comprises 891 residues: Alanine--tRNA ligase (891 aa).

Positions 569, 573, 671, and 675 each coordinate Zn(2+).

This sequence belongs to the class-II aminoacyl-tRNA synthetase family. As to quaternary structure, homotetramer. It depends on Zn(2+) as a cofactor.

The protein localises to the cytoplasm. It catalyses the reaction tRNA(Ala) + L-alanine + ATP = L-alanyl-tRNA(Ala) + AMP + diphosphate. In terms of biological role, catalyzes the attachment of alanine to tRNA(Ala) in a two-step reaction: alanine is first activated by ATP to form Ala-AMP and then transferred to the acceptor end of tRNA(Ala). Also edits incorrectly charged Ser-tRNA(Ala) and Gly-tRNA(Ala) via its editing domain. This Blochmanniella floridana protein is Alanine--tRNA ligase.